The chain runs to 84 residues: Delta-conotoxin-like MVIA (84 aa).

An N-terminal signal peptide occupies residues 1–22; the sequence is MKLTCVMIVAVLFLTTWTFVTA. The propeptide occupies 23–49; that stretch reads DDSRYGLKNLFPKARHEMKNPEASKLN. Cystine bridges form between cysteine 54/cysteine 69, cysteine 61/cysteine 73, and cysteine 68/cysteine 77. The residue at position 65 (proline 65) is a 4-hydroxyproline. Position 83 is a serine amide (serine 83).

It belongs to the conotoxin O1 superfamily. Expressed by the venom duct.

It localises to the secreted. In terms of biological role, delta-conotoxins bind to site 6 of voltage-gated sodium channels (Nav) and inhibit the inactivation process. The polypeptide is Delta-conotoxin-like MVIA (Conus magus (Magical cone)).